The sequence spans 316 residues: Dof zinc finger protein DOF5.7 (316 aa).

Residues 1–42 are disordered; the sequence is MSSHTNLPSPKPVPKPDHRISGTSQTKKPPSSSVAQDQQNLK. Residues 21–42 show a composition bias toward polar residues; the sequence is SGTSQTKKPPSSSVAQDQQNLK. A Dof-type zinc finger spans residues 41-95; that stretch reads LKCPRCNSPNTKFCYYNNYSLSQPRHFCKSCRRYWTRGGALRNVPIGGGCRKTKK. 4 residues coordinate Zn(2+): Cys-43, Cys-46, Cys-68, and Cys-71. 2 disordered regions span residues 92–111 and 257–294; these read KTKK…SSSS and NSSS…NTGG. The segment covering 101–111 has biased composition (low complexity); it reads SSMNTLPSSSS. The span at 257–291 shows a compositional bias: polar residues; it reads NSSSPSSPTKKGDNQTEWYFGNNSDNEGVISNNAN.

The protein localises to the nucleus. In terms of biological role, transcription factor that binds specifically to a 5'-AA[AG]G-3' consensus core sequence. In Arabidopsis thaliana (Mouse-ear cress), this protein is Dof zinc finger protein DOF5.7 (DOF5.7).